A 967-amino-acid polypeptide reads, in one-letter code: MFNGAVSLLFLFLAVVSARADPTFNDDVLGLIVFKAGLDDPLSKLSSWNSEDYDPCNWVGCTCDPATNRVSELRLDAFSLSGHIGRGLLRLQFLHTLVLSNNNLTGTLNPEFPHLGSLQVVDFSGNNLSGRIPDGFFEQCGSLRSVSLANNKLTGSIPVSLSYCSTLTHLNLSSNQLSGRLPRDIWFLKSLKSLDFSHNFLQGDIPDGLGGLYDLRHINLSRNWFSGDVPSDIGRCSSLKSLDLSENYFSGNLPDSMKSLGSCSSIRLRGNSLIGEIPDWIGDIATLEILDLSANNFTGTVPFSLGNLEFLKDLNLSANMLAGELPQTLSNCSNLISIDVSKNSFTGDVLKWMFTGNSESSSLSRFSLHKRSGNDTIMPIVGFLQGLRVLDLSSNGFTGELPSNIWILTSLLQLNMSTNSLFGSIPTGIGGLKVAEILDLSSNLLNGTLPSEIGGAVSLKQLHLHRNRLSGQIPAKISNCSALNTINLSENELSGAIPGSIGSLSNLEYIDLSRNNLSGSLPKEIEKLSHLLTFNISHNNITGELPAGGFFNTIPLSAVTGNPSLCGSVVNRSCLSVHPKPIVLNPNSSNPTNGPALTGQIRKSVLSISALIAIGAAAVIAIGVVAVTLLNVHARSSVSRHDAAAALALSVGETFSCSPSKDQEFGKLVMFSGEVDVFDTTGADALLNKDSELGRGGFGVVYKTSLQDGRPVAVKKLTVSGLIKSQEEFEREMRKLGKLRHKNVVEIKGYYWTQSLQLLIHEFVSGGSLYRHLHGDESVCLTWRQRFSIILGIARGLAFLHSSNITHYNMKATNVLIDAAGEAKVSDFGLARLLASALDRCVLSGKVQSALGYTAPEFACRTVKITDRCDVYGFGILVLEVVTGKRPVEYAEDDVVVLCETVREGLEEGRVEECVDPRLRGNFPAEEAIPVIKLGLVCGSQVPSNRPEMEEVVKILELIQCPSHDLE.

The signal sequence occupies residues Met1–Ala20. The Extracellular segment spans residues Asp21 to Ser609. 11 LRR repeats span residues Leu91–His114, Leu115–Gln139, Gly141–Cys164, Ser165–Lys189, Leu191–Leu212, Asp214–Cys236, Ser237–Leu260, Ser262–Ile284, Ala285–Asn307, Leu308–Cys332, and Asn334–Gly356. N-linked (GlcNAc...) asparagine glycans are attached at residues Asn103 and Asn127. A glycan (N-linked (GlcNAc...) asparagine) is linked at Asn171. A glycan (N-linked (GlcNAc...) asparagine) is linked at Asn219. Asn296, Asn315, and Asn331 each carry an N-linked (GlcNAc...) asparagine glycan. An N-linked (GlcNAc...) asparagine glycan is attached at Asn374. LRR repeat units lie at residues Leu384–Leu408, Ser410–Leu432, Lys433–Ala456, Val457–Cys480, Ala482–Ser503, Leu504–Leu528, and His530–Asn552. Residues Asn415, Asn446, Asn479, Asn487, Asn516, Asn535, Asn540, Asn571, and Asn587 are each glycosylated (N-linked (GlcNAc...) asparagine). The helical transmembrane segment at Ala610–Leu630 threads the bilayer. The Cytoplasmic portion of the chain corresponds to Asn631–Glu967. Positions Leu687 to Ile959 constitute a Protein kinase domain. ATP contacts are provided by residues Leu693–Val701 and Lys715.

The protein belongs to the protein kinase superfamily. Ser/Thr protein kinase family. Expressed in the vascular strands of cotyledons, the shoot apex, hypocotyls, roots, leaves, stems and flowers.

It is found in the cell membrane. Functionally, leucine-rich repeat receptor-like protein kinase that may play a role in vascular tissues development. The sequence is that of Leucine-rich repeat receptor-like protein kinase PXC2 from Arabidopsis thaliana (Mouse-ear cress).